Here is a 181-residue protein sequence, read N- to C-terminus: GTP cyclohydrolase 1 2 (181 aa).

Belongs to the GTP cyclohydrolase I family. In terms of assembly, homomer.

The enzyme catalyses GTP + H2O = 7,8-dihydroneopterin 3'-triphosphate + formate + H(+). It functions in the pathway cofactor biosynthesis; 7,8-dihydroneopterin triphosphate biosynthesis; 7,8-dihydroneopterin triphosphate from GTP: step 1/1. The protein is GTP cyclohydrolase 1 2 (folE2) of Pseudomonas aeruginosa (strain ATCC 15692 / DSM 22644 / CIP 104116 / JCM 14847 / LMG 12228 / 1C / PRS 101 / PAO1).